The primary structure comprises 595 residues: UvrABC system protein C (595 aa).

Residues 14–91 (SNPGCYLHKD…IQENMPKFNI (78 aa)) form the GIY-YIG domain. A UVR domain is found at 196–231 (DKIVNQLKAKMKDMSDQMAFERAAEYRDLIEAVSTL).

This sequence belongs to the UvrC family. As to quaternary structure, interacts with UvrB in an incision complex.

Its subcellular location is the cytoplasm. Its function is as follows. The UvrABC repair system catalyzes the recognition and processing of DNA lesions. UvrC both incises the 5' and 3' sides of the lesion. The N-terminal half is responsible for the 3' incision and the C-terminal half is responsible for the 5' incision. This chain is UvrABC system protein C, found in Streptococcus thermophilus (strain ATCC BAA-491 / LMD-9).